The following is a 346-amino-acid chain: Golgi to ER traffic protein 4 (346 aa).

The tract at residues 317-346 (GQNQGGSRRTPQGRSQSKTVEAPPASMELD) is disordered. Polar residues predominate over residues 321-335 (GGSRRTPQGRSQSKT).

It belongs to the GET4 family. Component of the get4/get5/sgt2 sorting complex.

Its subcellular location is the cytoplasm. Functionally, component of the get4/get5/sgt2 sorting complex involved in the GET (guided entry of TA proteins) pathway that leads to the insertion of tail-anchored (TA) proteins into the endoplasmic reticulum. Get4 and get5 form an obligate complex that catalyzes the transfer of tail-anchored proteins destined to the endoplasmic reticulum from sgt2 to the cytosolic targeting factor which then targets the TA protein to the ER membrane via get1/get2. This chain is Golgi to ER traffic protein 4, found in Aspergillus fumigatus (strain ATCC MYA-4609 / CBS 101355 / FGSC A1100 / Af293) (Neosartorya fumigata).